Reading from the N-terminus, the 257-residue chain is MTDLKKAAQRGIELMDLTTLNDDDTDQKVIDLCHKAKSPAGNTAAICIYPRFIPIARKTLNELDCEDIKIATVTNFPHGNDDIAIAVLETRAAVAYGADEVDVVFPYRALMDGNETVGFEMVKACKEECGDDAILKVIIESGVLKDPALIRKASELAIDAGADFIKTSTGKVPVNATLEAAEIMLTVISEKNRNVGFKPAGGVRDAAQTAEFLDLAARILGDDWVTPQTFRFGASSLLNSLLHTLELVDAPKPTSGY.

The Proton donor/acceptor role is filled by aspartate 102. The Schiff-base intermediate with acetaldehyde role is filled by lysine 166. Residue lysine 198 is the Proton donor/acceptor of the active site.

This sequence belongs to the DeoC/FbaB aldolase family. DeoC type 2 subfamily.

Its subcellular location is the cytoplasm. The catalysed reaction is 2-deoxy-D-ribose 5-phosphate = D-glyceraldehyde 3-phosphate + acetaldehyde. It functions in the pathway carbohydrate degradation; 2-deoxy-D-ribose 1-phosphate degradation; D-glyceraldehyde 3-phosphate and acetaldehyde from 2-deoxy-alpha-D-ribose 1-phosphate: step 2/2. Functionally, catalyzes a reversible aldol reaction between acetaldehyde and D-glyceraldehyde 3-phosphate to generate 2-deoxy-D-ribose 5-phosphate. The sequence is that of Deoxyribose-phosphate aldolase from Shewanella frigidimarina (strain NCIMB 400).